The chain runs to 164 residues: NADH-quinone oxidoreductase subunit I (164 aa).

2 4Fe-4S ferredoxin-type domains span residues 56-85 and 95-124; these read RRYE…IEAE and TRYD…EGPN. [4Fe-4S] cluster contacts are provided by Cys-65, Cys-68, Cys-71, Cys-75, Cys-104, Cys-107, Cys-110, and Cys-114.

This sequence belongs to the complex I 23 kDa subunit family. NDH-1 is composed of 14 different subunits. Subunits NuoA, H, J, K, L, M, N constitute the membrane sector of the complex. The cofactor is [4Fe-4S] cluster.

The protein resides in the cell inner membrane. The catalysed reaction is a quinone + NADH + 5 H(+)(in) = a quinol + NAD(+) + 4 H(+)(out). In terms of biological role, NDH-1 shuttles electrons from NADH, via FMN and iron-sulfur (Fe-S) centers, to quinones in the respiratory chain. The immediate electron acceptor for the enzyme in this species is believed to be ubiquinone. Couples the redox reaction to proton translocation (for every two electrons transferred, four hydrogen ions are translocated across the cytoplasmic membrane), and thus conserves the redox energy in a proton gradient. In Anaplasma phagocytophilum (strain HZ), this protein is NADH-quinone oxidoreductase subunit I.